The following is a 324-amino-acid chain: Uric acid degradation bifunctional protein TTL (324 aa).

Position 2 is an N-acetylalanine (Ala2). Residues 2–29 (AMEIGEDEWKVCCGSSEFAKQMSTSGPL) form a required for BRI1-binding region. Residues 2-161 (AMEIGEDEWK…LRMAKLFSDK (160 aa)) are OHCU decarboxylase. The active-site Proton donor; for OHCU decarboxylase activity is the His58. 6 residues coordinate (S)-allantoin: His58, Pro59, Glu80, Phe111, Ile113, and Ala115. The segment at 178–324 (KPQDRLRIIG…PFSFSTYRGS (147 aa)) is HIU hydrolase. Residues 182–190 (RLRIIGGHL) carry the Internal peroxisomal targeting signal (PTS2) motif.

It in the N-terminal section; belongs to the OHCU decarboxylase family. This sequence in the C-terminal section; belongs to the transthyretin family. 5-hydroxyisourate hydrolase subfamily. Homodimer. Forms tetramers. Interacts with BRI1 in a kinase-dependent manner. Interacts with B1L. In terms of processing, phosphorylated by BRI1 in vitro. Expressed ubiquitously with highest levels in flowers buds and elongating inflorescences. In terms of tissue distribution, mainly expressed in stems and leaves, and, to a lower extent, in flowers, flower buds and seedlings. As to expression, strongly expressed in flower buds and leaves, to a lower extent in stems, and at low levels in seedlings and flowers.

The protein localises to the cell membrane. The protein resides in the peroxisome. It is found in the cytoplasm. Its subcellular location is the cytosol. The enzyme catalyses 5-hydroxyisourate + H2O = 5-hydroxy-2-oxo-4-ureido-2,5-dihydro-1H-imidazole-5-carboxylate + H(+). The catalysed reaction is 5-hydroxy-2-oxo-4-ureido-2,5-dihydro-1H-imidazole-5-carboxylate + H(+) = (S)-allantoin + CO2. It participates in purine metabolism; urate degradation; (S)-allantoin from urate: step 2/3. The protein operates within purine metabolism; urate degradation; (S)-allantoin from urate: step 3/3. Involved in the last two steps of the degradation of uric acid, i.e. the hydrolysis of 5-hydroxyisourate (HIU) to 2-oxo-4-hydroxy-4-carboxy-5-ureidoimidazoline (OHCU) and its stereoselective decarboxylation to (S)-allantoin, a major ureide compound. Might function as a negative regulator to modulate brassinosteroid-mediated plant growth. Together with B1L, prevents plant growth and development, but by opposition to B1L, negatively regulates cold tolerance, probably in a brassinosteroid (BR) and allantoin-dependent manner. The sequence is that of Uric acid degradation bifunctional protein TTL from Arabidopsis thaliana (Mouse-ear cress).